Consider the following 205-residue polypeptide: Octanoyltransferase (205 aa).

Residues 30 to 205 (ERTADEIWLL…QALRARLGYA (176 aa)) form the BPL/LPL catalytic domain. Substrate is bound by residues 69 to 76 (RGGQVTYH), 136 to 138 (SLG), and 149 to 151 (GLA). Cys-167 acts as the Acyl-thioester intermediate in catalysis.

This sequence belongs to the LipB family.

The protein localises to the cytoplasm. It carries out the reaction octanoyl-[ACP] + L-lysyl-[protein] = N(6)-octanoyl-L-lysyl-[protein] + holo-[ACP] + H(+). It functions in the pathway protein modification; protein lipoylation via endogenous pathway; protein N(6)-(lipoyl)lysine from octanoyl-[acyl-carrier-protein]: step 1/2. Functionally, catalyzes the transfer of endogenously produced octanoic acid from octanoyl-acyl-carrier-protein onto the lipoyl domains of lipoate-dependent enzymes. Lipoyl-ACP can also act as a substrate although octanoyl-ACP is likely to be the physiological substrate. This chain is Octanoyltransferase, found in Ectopseudomonas mendocina (strain ymp) (Pseudomonas mendocina).